Consider the following 78-residue polypeptide: Small ribosomal subunit protein uS17 (78 aa).

This sequence belongs to the universal ribosomal protein uS17 family. In terms of assembly, part of the 30S ribosomal subunit.

Functionally, one of the primary rRNA binding proteins, it binds specifically to the 5'-end of 16S ribosomal RNA. This chain is Small ribosomal subunit protein uS17, found in Sinorhizobium fredii (strain NBRC 101917 / NGR234).